A 240-amino-acid polypeptide reads, in one-letter code: MVLELYLDLLSQPCRAIYIFAKKNNIPFQMHTVELRKGEHLSDAFARVNPMKRVPAMMDGGFTLCESVAILLYLAHKYKVPDHWYPQDLQARARVDEYLAWQHTGLRRSCLRALWHKVMFPVFLGEQIPPETLAATLAELDVNLQVLEDKFLQDKDFLVGPHISLADLVAITELMHPVGGGCPVFEGHPRLAAWYQRVEAAVGKDLFREAHEVILKVKDCPPADLIIKQKLMPRVLAMIQ.

One can recognise a GST N-terminal domain in the interval 2-82 (VLELYLDLLS…YLAHKYKVPD (81 aa)). Glutathione-binding positions include His-40, 53-54 (RV), and 66-67 (ES). The GST C-terminal domain occupies 88–222 (DLQARARVDE…VILKVKDCPP (135 aa)).

The protein belongs to the GST superfamily. Theta family. In terms of assembly, homodimer. In terms of tissue distribution, in liver, highest expression found in central vein limiting plate hepatocytes. Also expressed in interlobular bile duct epithelial cells. In lung, expressed in club cells and ciliated cells of the bronchiolar epithelium and in type II alveolar cells of the lung parenchyma.

The protein resides in the cytoplasm. It is found in the nucleus. It catalyses the reaction RX + glutathione = an S-substituted glutathione + a halide anion + H(+). In terms of biological role, conjugation of reduced glutathione to a wide number of exogenous and endogenous hydrophobic electrophiles. Also binds steroids, bilirubin, carcinogens and numerous organic anions. Has dichloromethane dehalogenase activity. This Mus musculus (Mouse) protein is Glutathione S-transferase theta-1 (Gstt1).